The sequence spans 170 residues: Pollen-specific protein C13 (170 aa).

Residues 1 to 27 form the signal peptide; sequence MASVPAPATTTAAVILCLCVVLSCAAA. Disulfide bonds link C43-C114, C46-C155, and C67-C102. Residue N53 is glycosylated (N-linked (GlcNAc...) asparagine).

It belongs to the Ole e I family. As to expression, pollen.

The protein is Pollen-specific protein C13 (MGS1) of Zea mays (Maize).